We begin with the raw amino-acid sequence, 106 residues long: MSLSNKCFFFVSKSSSGMRSTSSSPPSMSNLAYWYVAKILSERILRISALLMYTLMEAFLIRNSPSISFNTASGGIEGEKFGREHIIVINIYIYIYIYTSTLQLCV.

This is an uncharacterized protein from Saccharomyces cerevisiae (strain ATCC 204508 / S288c) (Baker's yeast).